A 311-amino-acid polypeptide reads, in one-letter code: HPr kinase/phosphorylase (311 aa).

Residues H139 and K160 contribute to the active site. 154 to 161 is a binding site for ATP; sequence GESGVGKS. Residue S161 coordinates Mg(2+). Residue D178 is the Proton acceptor; for phosphorylation activity. Proton donor; for dephosphorylation activity of the active site. The important for the catalytic mechanism of both phosphorylation and dephosphorylation stretch occupies residues 202-211; sequence IEIRGIGILD. E203 is a Mg(2+) binding site. Residue R244 is part of the active site. The segment at 265-270 is important for the catalytic mechanism of dephosphorylation; sequence PVRPGR.

The protein belongs to the HPrK/P family. In terms of assembly, homohexamer. Requires Mg(2+) as cofactor.

It carries out the reaction [HPr protein]-L-serine + ATP = [HPr protein]-O-phospho-L-serine + ADP + H(+). The catalysed reaction is [HPr protein]-O-phospho-L-serine + phosphate + H(+) = [HPr protein]-L-serine + diphosphate. In terms of biological role, catalyzes the ATP- as well as the pyrophosphate-dependent phosphorylation of a specific serine residue in HPr, a phosphocarrier protein of the phosphoenolpyruvate-dependent sugar phosphotransferase system (PTS). HprK/P also catalyzes the pyrophosphate-producing, inorganic phosphate-dependent dephosphorylation (phosphorolysis) of seryl-phosphorylated HPr (P-Ser-HPr). The two antagonistic activities of HprK/P are regulated by several intracellular metabolites, which change their concentration in response to the absence or presence of rapidly metabolisable carbon sources (glucose, fructose, etc.) in the growth medium. Therefore, by controlling the phosphorylation state of HPr, HPrK/P is a sensor enzyme that plays a major role in the regulation of carbon metabolism and sugar transport: it mediates carbon catabolite repression (CCR), and regulates PTS-catalyzed carbohydrate uptake and inducer exclusion. The protein is HPr kinase/phosphorylase of Caldicellulosiruptor bescii (strain ATCC BAA-1888 / DSM 6725 / KCTC 15123 / Z-1320) (Anaerocellum thermophilum).